Consider the following 205-residue polypeptide: Holliday junction branch migration complex subunit RuvA (205 aa).

A domain I region spans residues Met1–Ala64. The segment at Glu65–Leu143 is domain II. The interval Ala144–Ser153 is flexible linker. The domain III stretch occupies residues Ser153 to Val205.

The protein belongs to the RuvA family. As to quaternary structure, homotetramer. Forms an RuvA(8)-RuvB(12)-Holliday junction (HJ) complex. HJ DNA is sandwiched between 2 RuvA tetramers; dsDNA enters through RuvA and exits via RuvB. An RuvB hexamer assembles on each DNA strand where it exits the tetramer. Each RuvB hexamer is contacted by two RuvA subunits (via domain III) on 2 adjacent RuvB subunits; this complex drives branch migration. In the full resolvosome a probable DNA-RuvA(4)-RuvB(12)-RuvC(2) complex forms which resolves the HJ.

It is found in the cytoplasm. In terms of biological role, the RuvA-RuvB-RuvC complex processes Holliday junction (HJ) DNA during genetic recombination and DNA repair, while the RuvA-RuvB complex plays an important role in the rescue of blocked DNA replication forks via replication fork reversal (RFR). RuvA specifically binds to HJ cruciform DNA, conferring on it an open structure. The RuvB hexamer acts as an ATP-dependent pump, pulling dsDNA into and through the RuvAB complex. HJ branch migration allows RuvC to scan DNA until it finds its consensus sequence, where it cleaves and resolves the cruciform DNA. The polypeptide is Holliday junction branch migration complex subunit RuvA (Cellvibrio japonicus (strain Ueda107) (Pseudomonas fluorescens subsp. cellulosa)).